We begin with the raw amino-acid sequence, 230 residues long: MADS-box transcription factor 50 (230 aa).

The region spanning Met1–Ser61 is the MADS-box domain. Residues Ile86 to Leu176 enclose the K-box domain. Positions Gly209–Ser230 are disordered.

In terms of tissue distribution, expressed in mature leaves and at low levels in roots and young panicles.

The protein resides in the nucleus. Its function is as follows. Probable transcription factor active in flowering time control. May control internode elongation and promote floral transition phase. May act upstream of the floral regulators MADS1, MADS14, MADS15 and MADS18 in the floral induction pathway. The protein is MADS-box transcription factor 50 (MADS50) of Oryza sativa subsp. japonica (Rice).